The primary structure comprises 210 residues: MQVKNPILGLCQKAKFALSAAKVEQCPDDQGYEVAFAGRSNAGKSSALNTLTHASLARTSKTPGRTQLLNFFSLDDERRLVDLPGYGYAKVPIPLKQHWQKHLEAYLGSRECLRGVILMMDVRHPMTDFDKMMLDWAKASSMPMHILLTKADKLTHGAGKNTLLKVQSEIRKGWGDGVTIQLFSAPKRLGVEDAYRVLADWMELEDKPVI.

Residues 30 to 204 (QGYEVAFAGR…YRVLADWMEL (175 aa)) enclose the EngB-type G domain. GTP is bound by residues 38–45 (GRSNAGKS), 64–68 (GRTQL), 82–85 (DLPG), 149–152 (TKAD), and 182–185 (LFSA). Mg(2+) is bound by residues serine 45 and threonine 66.

It belongs to the TRAFAC class TrmE-Era-EngA-EngB-Septin-like GTPase superfamily. EngB GTPase family. Requires Mg(2+) as cofactor.

Its function is as follows. Necessary for normal cell division and for the maintenance of normal septation. This Pseudomonas putida (strain ATCC 700007 / DSM 6899 / JCM 31910 / BCRC 17059 / LMG 24140 / F1) protein is Probable GTP-binding protein EngB.